The following is a 652-amino-acid chain: MPDVIRITFPDGAEKEFPKGTTTEDIAASISPGLKKKAIAGKLNGRFVDLRTPLHEDGELVIITQDMPEALDILRHSTAHLMAQAIKRLYGNVKLGVGPVIENGFYYDIDMEHKLTPDDLPKIEAEMRKIVKENLDIVRKEVSREEAIRLYEEIGDELKLELIADIPEGEPISIYEQGEFFDLCRGVHVPSTGKIKEFKLLSISGAYWRGDSNNKMLQRIYGTAFFKKEDLDRYLRLLEEAKERDHRKLGKELELFTTSQQVGQGLPLWLPKGATIRRIIERYIVDKEVALGYDHVYTPVLGSVELYKTSGHWDHYKENMFPPMEMDNEELVLRPMNCPHHMMIYKSKLHSYRELPIRIAELGTMHRYEMSGALTGLQRVRGMTLNDAHIFVRPDQIKDEFKRVVNLILEVYKDFGIEEYSFRLSYRDPHDKEKYYDDDEMWEKAQRMLREAMDELGLDYYEAEGEAAFYGPKLDVQVRTALGKDETLSTVQLDFLLPERFDLTYIGEDGKPHRPVVIHRGVVSTMERFVAFLIEEYKGAFPTWLAPVQVKVIPVSPEAHLDYAYDVQRTLKERGFRVEVDERDEKIGYKIREAQMQKIPYMLVVGDKEVSERAVNVRRYGEKESRTMGLDEFMALLADDVREKRTRLGKAQ.

Residues 1–64 (MPDVIRITFP…HEDGELVIIT (64 aa)) enclose the TGS domain. The catalytic stretch occupies residues 245-542 (DHRKLGKELE…LIEEYKGAFP (298 aa)). Cysteine 338, histidine 389, and histidine 519 together coordinate Zn(2+).

The protein belongs to the class-II aminoacyl-tRNA synthetase family. In terms of assembly, homodimer. Zn(2+) serves as cofactor.

The protein localises to the cytoplasm. It carries out the reaction tRNA(Thr) + L-threonine + ATP = L-threonyl-tRNA(Thr) + AMP + diphosphate + H(+). Functionally, catalyzes the attachment of threonine to tRNA(Thr) in a two-step reaction: L-threonine is first activated by ATP to form Thr-AMP and then transferred to the acceptor end of tRNA(Thr). Also edits incorrectly charged L-seryl-tRNA(Thr). The protein is Threonine--tRNA ligase of Geobacillus kaustophilus (strain HTA426).